Here is a 232-residue protein sequence, read N- to C-terminus: GFP-like fluorescent chromoprotein dsFP483 (232 aa).

The segment at residues 66-68 (QYG) is a cross-link (2-iminomethyl-5-imidazolinone (Gln-Gly)). Residue Y67 is modified to 2,3-didehydrotyrosine.

The protein belongs to the GFP family. Post-translationally, contains a chromophore consisting of modified amino acid residues. The chromophore is formed by autocatalytic backbone condensation between Xaa-N and Gly-(N+2), oxidation of Tyr-(N+1) to didehydrotyrosine, and formation of a double bond to the alpha-amino nitrogen of residue Xaa-N. Maturation of the chromophore requires nothing other than molecular oxygen. The precise stereochemistry of the tyrosine has not been determined. Oral disk.

Its function is as follows. Pigment protein that is green in color. The protein is GFP-like fluorescent chromoprotein dsFP483 of Discosoma striata (Striped mushroom).